The chain runs to 287 residues: HTH-type transcriptional regulator MurR (287 aa).

One can recognise an HTH rpiR-type domain in the interval 1 to 77 (MLYLAKMRNA…MALIEEHSVS (77 aa)). A DNA-binding region (H-T-H motif) is located at residues 37-56 (SRNMAKQLEISQSSIVKFAQ). In terms of domain architecture, SIS spans 128 to 268 (VINLISKAPL…FVGMVQLNDV (141 aa)).

In terms of assembly, homotetramer.

The protein operates within amino-sugar metabolism; N-acetylmuramate degradation [regulation]. Its function is as follows. Represses the expression of the murPQ operon involved in the uptake and degradation of N-acetylmuramic acid (MurNAc). Binds to two adjacent inverted repeats within the operator region. MurNAc 6-phosphate, the substrate of MurQ, is the specific inducer that weakens binding of MurR to the operator. This chain is HTH-type transcriptional regulator MurR, found in Salmonella arizonae (strain ATCC BAA-731 / CDC346-86 / RSK2980).